The primary structure comprises 478 residues: MSPQTETKASVGFKAGVKEYKLTYYTPEYETKDTDILAAFRVTPQPGVPPEEAGAAVAAESSTGTWTTVWTDGLTSLDRYKGRCYHIEPVPGEETQFIAYVAYPLDLFEEGSVTNMFTSIVGNVFGFKALAALRLEDLRIPPAYTKTFQGPPHGIQVERDKLNKYGRPLLGCTIKPKLGLSAKNYGRAVYECLRGGLDFTKDDENVNSQPFMRWRDRFLFCAEAIYKSQAETGEIKGHYLNATAGTCEEMIKRAVFARELGVPIVMHDYLTGGFTANTSLAHYCRDNGLLLHIHRAMHAVIDRQKNHGMHFRVLAKALRLSGGDHIHAGTVVGKLEGDRESTLGFVDLLRDDYVEKDRSRGIFFTQDWVSLPGVLPVASGGIHVWHMPALTEIFGDDSVLHFGGGTLGHPWGNAPGAVANRVALEACVQARNEGRDLAVEGNEIVREACKWSPELAAACEVWKEIRFNFPTIDKLDGQ.

Residues 1–2 constitute a propeptide that is removed on maturation; it reads MS. 2 residues coordinate substrate: Asn-123 and Thr-173. Lys-175 serves as the catalytic Proton acceptor. Lys-177 lines the substrate pocket. Residues Lys-201, Asp-203, and Glu-204 each contribute to the Mg(2+) site. The residue at position 201 (Lys-201) is an N6-carboxylysine. Ser-208 carries the post-translational modification Phosphoserine. Catalysis depends on His-294, which acts as the Proton acceptor. Substrate is bound by residues Arg-295 and His-327. Thr-330 bears the Phosphothreonine mark. Ser-379 provides a ligand contact to substrate.

Belongs to the RuBisCO large chain family. Type I subfamily. As to quaternary structure, heterohexadecamer of 8 large chains and 8 small chains; disulfide-linked. The disulfide link is formed within the large subunit homodimers. The cofactor is Mg(2+). In terms of processing, the disulfide bond which can form in the large chain dimeric partners within the hexadecamer appears to be associated with oxidative stress and protein turnover.

The protein resides in the plastid. It localises to the chloroplast. The enzyme catalyses 2 (2R)-3-phosphoglycerate + 2 H(+) = D-ribulose 1,5-bisphosphate + CO2 + H2O. It catalyses the reaction D-ribulose 1,5-bisphosphate + O2 = 2-phosphoglycolate + (2R)-3-phosphoglycerate + 2 H(+). Functionally, ruBisCO catalyzes two reactions: the carboxylation of D-ribulose 1,5-bisphosphate, the primary event in carbon dioxide fixation, as well as the oxidative fragmentation of the pentose substrate in the photorespiration process. Both reactions occur simultaneously and in competition at the same active site. This Lepidium virginicum (Virginia pepperweed) protein is Ribulose bisphosphate carboxylase large chain.